Reading from the N-terminus, the 309-residue chain is Cytochrome c biogenesis protein CcsA (309 aa).

Transmembrane regions (helical) follow at residues 18-38 (LGLL…GAFF), 43-63 (FFIV…QLLF), 67-87 (ISGH…TWGI), 102-122 (IIPS…CFVL), 148-168 (VMLS…VLFI), 216-236 (SILI…VWAN), 250-267 (TWAF…HMRI), and 279-299 (LATT…FLGI).

This sequence belongs to the CcmF/CycK/Ccl1/NrfE/CcsA family. In terms of assembly, may interact with ccs1.

The protein resides in the cellular thylakoid membrane. Its function is as follows. Required during biogenesis of c-type cytochromes (cytochrome c6 and cytochrome f) at the step of heme attachment. The protein is Cytochrome c biogenesis protein CcsA of Prochlorococcus marinus (strain MIT 9215).